The chain runs to 190 residues: Elongation factor P (190 aa).

Position 34 is an N6-(3,6-diaminohexanoyl)-5-hydroxylysine (K34).

It belongs to the elongation factor P family. In terms of processing, may be beta-lysylated on the epsilon-amino group of Lys-34 by the combined action of EpmA and EpmB, and then hydroxylated on the C5 position of the same residue by EpmC (if this protein is present). Lysylation is critical for the stimulatory effect of EF-P on peptide-bond formation. The lysylation moiety may extend toward the peptidyltransferase center and stabilize the terminal 3-CCA end of the tRNA. Hydroxylation of the C5 position on Lys-34 may allow additional potential stabilizing hydrogen-bond interactions with the P-tRNA.

The protein localises to the cytoplasm. The protein operates within protein biosynthesis; polypeptide chain elongation. Functionally, involved in peptide bond synthesis. Alleviates ribosome stalling that occurs when 3 or more consecutive Pro residues or the sequence PPG is present in a protein, possibly by augmenting the peptidyl transferase activity of the ribosome. Modification of Lys-34 is required for alleviation. In Hahella chejuensis (strain KCTC 2396), this protein is Elongation factor P.